Reading from the N-terminus, the 352-residue chain is Putative [LysW]-L-2-aminoadipate 6-phosphate reductase (352 aa).

11–14 (SGYT) serves as a coordination point for NADP(+). Residue Cys-148 is part of the active site. Residue Asn-319 participates in NADP(+) binding.

It belongs to the NAGSA dehydrogenase family. Type 1 subfamily. LysY sub-subfamily.

The protein resides in the cytoplasm. It catalyses the reaction [amino-group carrier protein]-C-terminal-N-(1-carboxy-5-oxopentan-1-yl)-L-glutamine + phosphate + NADP(+) = [amino-group carrier protein]-C-terminal-N-(1-carboxy-5-phosphooxy-5-oxopentan-1-yl)-L-glutamine + NADPH + H(+). The protein operates within amino-acid biosynthesis; L-lysine biosynthesis via AAA pathway; L-lysine from L-alpha-aminoadipate (Thermus route): step 3/5. Its function is as follows. Catalyzes the NADPH-dependent reduction of [LysW]-aminoadipate 6-phosphate to yield [LysW]-aminoadipate 6-semialdehyde. This Thermomicrobium roseum (strain ATCC 27502 / DSM 5159 / P-2) protein is Putative [LysW]-L-2-aminoadipate 6-phosphate reductase.